Reading from the N-terminus, the 240-residue chain is uncharacterized protein (240 aa).

Disordered stretches follow at residues 99–121 and 136–167; these read EPPTVSAPPPPSQFSDEPTSPEL and ATVSSPTSPRPITTESSRVSPTKEKWGRKRVH. Residues 137–155 are compositionally biased toward polar residues; sequence TVSSPTSPRPITTESSRVS.

This is an uncharacterized protein from Ictaluridae (bullhead catfishes).